Consider the following 272-residue polypeptide: AA9 family lytic polysaccharide monooxygenase G (272 aa).

The signal sequence occupies residues 1–22 (MKGAGSASFLLTLLSTITRTSA). Residue H23 coordinates Cu(2+). The N-linked (GlcNAc...) asparagine glycan is linked to N60. Disulfide bonds link C78/C202 and C121/C125. Residue H110 coordinates Cu(2+). O2 is bound by residues H188 and Q197. Y199 is a binding site for Cu(2+).

Belongs to the polysaccharide monooxygenase AA9 family. Requires Cu(2+) as cofactor.

Its subcellular location is the secreted. It catalyses the reaction [(1-&gt;4)-beta-D-glucosyl]n+m + reduced acceptor + O2 = 4-dehydro-beta-D-glucosyl-[(1-&gt;4)-beta-D-glucosyl]n-1 + [(1-&gt;4)-beta-D-glucosyl]m + acceptor + H2O.. Lytic polysaccharide monooxygenase (LPMO) that depolymerizes crystalline and amorphous polysaccharides via the oxidation of scissile alpha- or beta-(1-4)-glycosidic bonds, yielding C1 or C4 oxidation products. Catalysis by LPMOs requires the reduction of the active-site copper from Cu(II) to Cu(I) by a reducing agent and H(2)O(2) or O(2) as a cosubstrate. Acts preferentially on crystalline regions of cellulose such as highly crystalline algae cellulose. The polypeptide is AA9 family lytic polysaccharide monooxygenase G (Emericella nidulans (strain FGSC A4 / ATCC 38163 / CBS 112.46 / NRRL 194 / M139) (Aspergillus nidulans)).